A 359-amino-acid polypeptide reads, in one-letter code: Lipopolysaccharide 1,6-galactosyltransferase (359 aa).

Gln242 and Glu274 together coordinate UDP.

The protein belongs to the glycosyltransferase group 1 family. Glycosyltransferase 4 subfamily.

The enzyme catalyses alpha-D-Glc-(1-&gt;3)-[L-alpha-D-Hep-(1-&gt;7)]-4-O-PO3(2-)-L-alpha-D-Hep-(1-&gt;3)-4-O-PO3(2-)-L-alpha-D-Hep-(1-&gt;5)-[alpha-Kdo-(2-&gt;4)]-alpha-Kdo-(2-&gt;6)-lipid A + UDP-alpha-D-galactose = alpha-D-Gal-(1-&gt;6)-alpha-D-Glc-(1-&gt;3)-[L-alpha-D-Hep-(1-&gt;7)]-4-O-PO3(2-)-L-alpha-D-Hep-(1-&gt;3)-4-O-PO3(2-)-L-alpha-D-Hep-(1-&gt;5)-[alpha-Kdo-(2-&gt;4)]-alpha-Kdo-(2-&gt;6)-lipid A + UDP + H(+). The protein operates within bacterial outer membrane biogenesis; LPS core biosynthesis. In terms of biological role, galactosyltransferase involved in the biosynthesis of the core oligosaccharide region of lipopolysaccharide (LPS). Catalyzes the addition of galactose from UDP-galactose to the first glucose residue of the LPS outer core. Cannot use other sugar donors, such as UDP-glucose, UDP-glucuronic acid, UDP-galacuronic acid, GDP-mannose, ADP-glucose and GDP-glucose. In the absence of a lipid acceptor, can hydrolyze UDP-galactose to UDP and galactose. The polypeptide is Lipopolysaccharide 1,6-galactosyltransferase (Escherichia coli (strain K12)).